A 325-amino-acid polypeptide reads, in one-letter code: tRNA N6-adenosine threonylcarbamoyltransferase (325 aa).

Fe cation is bound by residues His-107, His-111, and Tyr-127. Residues 127 to 131 (YVSGG), Asp-159, Gly-172, Glu-176, and Asn-257 each bind substrate. Asp-285 provides a ligand contact to Fe cation.

Belongs to the KAE1 / TsaD family. In terms of assembly, monomer. Component of the KEOPS complex that consists of Kae1, Bud32, Cgi121 and Pcc1; the whole complex dimerizes. The cofactor is Fe(2+).

The protein localises to the cytoplasm. It carries out the reaction L-threonylcarbamoyladenylate + adenosine(37) in tRNA = N(6)-L-threonylcarbamoyladenosine(37) in tRNA + AMP + H(+). In terms of biological role, required for the formation of a threonylcarbamoyl group on adenosine at position 37 (t(6)A37) in tRNAs that read codons beginning with adenine. Is a component of the KEOPS complex that is probably involved in the transfer of the threonylcarbamoyl moiety of threonylcarbamoyl-AMP (TC-AMP) to the N6 group of A37. Kae1 likely plays a direct catalytic role in this reaction, but requires other protein(s) of the complex to fulfill this activity. The polypeptide is tRNA N6-adenosine threonylcarbamoyltransferase (Thermococcus kodakarensis (strain ATCC BAA-918 / JCM 12380 / KOD1) (Pyrococcus kodakaraensis (strain KOD1))).